Here is a 516-residue protein sequence, read N- to C-terminus: Cytochrome P450 6d1 (516 aa).

Heme is bound at residue C461.

Belongs to the cytochrome P450 family. Heme is required as a cofactor.

It is found in the endoplasmic reticulum membrane. Its subcellular location is the microsome membrane. Its function is as follows. Metabolizes pyrethroid insecticides and other xenobiotics. This Musca domestica (House fly) protein is Cytochrome P450 6d1 (CYP6D1).